A 227-amino-acid polypeptide reads, in one-letter code: TKPGYINAAFRSSKNNEAYFFINDKYVLLDYAPGSSRDKVLYGPTPVRDGFKSLNQTIFGSYGIDCSFDTENNEAFIFYENFCALIDYAPHSKKDKIILGPKKIADVFPFFEGTVFESGIDAAYRSTRGKEVYLFKGDQYARIDYGSNSMVNKEIKSISSGYPCFRNTIFESGADAAFASHKTNEVYFFKDDHYARVKVTPGGKLAIMDGVREIVDYWPSLKDIVPL.

Hemopexin repeat units follow at residues 3–46 (PGYI…GPTP), 61–111 (SYGI…FPFF), 117–165 (ESGI…YPCF), and 171–221 (ESGA…WPSL). Ca(2+) contacts are provided by N7 and D65. S118 provides a ligand contact to spermine. D121 and D175 together coordinate Ca(2+).

Monomer and homodimer. Dimers are prevalent in solution.

Its subcellular location is the cytoplasm. It is found in the cytosol. May play a role in response to oxidative stress and polyamine biosynthesis. The monomeric form binds one hemin per monomer. In the dimeric form, about half of the dimers bind one molecule of spermine each under physiological conditions. Ligand binding is mutually exclusive as binding of hemin leads to dissociation of the dimer. This is Albumin-2 from Lathyrus sativus (White vetchling).